We begin with the raw amino-acid sequence, 523 residues long: Butyrophilin subfamily 2 member A2 (523 aa).

A signal peptide spans 1 to 32 (MEPAAALHFSLPASLLLLLLLLLLSLCALVSA). Topologically, residues 33 to 265 (QFTVVGPANP…AVILTASPWM (233 aa)) are extracellular. Residues 34 to 145 (FTVVGPANPI…SYDEAILRLV (112 aa)) form the Ig-like V-type domain. N50, N118, N220, and N226 each carry an N-linked (GlcNAc...) asparagine glycan. An intrachain disulfide couples C55 to C129. One can recognise an Ig-like C2-type domain in the interval 153–234 (PLIEIKAQED…VNNTLLGQEK (82 aa)). A helical transmembrane segment spans residues 266 to 286 (VSMTVILAVFIIFMAVSICCI). Residues 286-321 (IKKLQREKKILSGEKKVEQEEKEIAQQLQEELRWRR) adopt a coiled-coil conformation. Residues 287-523 (KKLQREKKIL…LHRVGTHQSL (237 aa)) are Cytoplasmic-facing. A B30.2/SPRY domain is found at 309 to 502 (IAQQLQEELR…IFICPALTGA (194 aa)).

It belongs to the immunoglobulin superfamily. BTN/MOG family. Post-translationally, N-glycosylated. As to expression, highly expressed in brain, bone marrow, small intestine, muscle, spleen and pancreas. Moderate expression was seen in lung, liver and kidney.

The protein resides in the membrane. In terms of biological role, inhibits the proliferation of CD4 and CD8 T-cells activated by anti-CD3 antibodies, T-cell metabolism and IL2 and IFNG secretion. This Homo sapiens (Human) protein is Butyrophilin subfamily 2 member A2 (BTN2A2).